The primary structure comprises 163 residues: ATP synthase subunit b', chloroplastic (163 aa).

Residues 26–46 (ATLPLMALQFILLTVILTFVF) form a helical membrane-spanning segment.

This sequence belongs to the ATPase B chain family. In terms of assembly, F-type ATPases have 2 components, F(1) - the catalytic core - and F(0) - the membrane proton channel. F(1) has five subunits: alpha(3), beta(3), gamma(1), delta(1), epsilon(1). F(0) has four main subunits: a(1), b(1), b'(1) and c(10-14). The alpha and beta chains form an alternating ring which encloses part of the gamma chain. F(1) is attached to F(0) by a central stalk formed by the gamma and epsilon chains, while a peripheral stalk is formed by the delta, b and b' chains.

The protein resides in the plastid. It is found in the chloroplast thylakoid membrane. F(1)F(0) ATP synthase produces ATP from ADP in the presence of a proton or sodium gradient. F-type ATPases consist of two structural domains, F(1) containing the extramembraneous catalytic core and F(0) containing the membrane proton channel, linked together by a central stalk and a peripheral stalk. During catalysis, ATP synthesis in the catalytic domain of F(1) is coupled via a rotary mechanism of the central stalk subunits to proton translocation. Functionally, component of the F(0) channel, it forms part of the peripheral stalk, linking F(1) to F(0). The b'-subunit is a diverged and duplicated form of b found in plants and photosynthetic bacteria. This is ATP synthase subunit b', chloroplastic from Ochrosphaera neapolitana.